Reading from the N-terminus, the 341-residue chain is Probable galacturonosyltransferase-like 2 (341 aa).

Topologically, residues 1–4 (MHSK) are cytoplasmic. The helical; Signal-anchor for type II membrane protein transmembrane segment at 5–22 (FILYLSILAVFTVSFAGG) threads the bilayer. At 23–341 (ERFKEAPKFF…LESRFDLIES (319 aa)) the chain is on the lumenal side. An N-linked (GlcNAc...) asparagine glycan is attached at Asn190.

This sequence belongs to the glycosyltransferase 8 family.

The protein localises to the golgi apparatus membrane. The protein operates within glycan metabolism; pectin biosynthesis. May be involved in pectin and/or xylans biosynthesis in cell walls. The sequence is that of Probable galacturonosyltransferase-like 2 (GATL2) from Arabidopsis thaliana (Mouse-ear cress).